Here is a 367-residue protein sequence, read N- to C-terminus: CCN family member 4 (367 aa).

The first 22 residues, 1–22, serve as a signal peptide directing secretion; sequence MRWLLPWTLAAVAVLMVGNILA. One can recognise an IGFBP N-terminal domain in the interval 45–118; that stretch reads RPEFCKWPCE…RYAIGVCAQV (74 aa). Cystine bridges form between Cys49–Cys73, Cys53–Cys75, Cys55–Cys76, and Cys62–Cys79. An N-linked (GlcNAc...) asparagine glycan is attached at Asn86. Disulfide bonds link Cys87–Cys101 and Cys93–Cys115. The VWFC domain occupies 121–186; the sequence is VGCVLDGVRY…GQCCEQWVCD (66 aa). Residue Asn143 is glycosylated (N-linked (GlcNAc...) asparagine). The 46-residue stretch at 215-260 folds into the TSP type-1 domain; sequence NCIAYTSPWSPCSTTCGLGISTRISNVNARCWPEQESRLCNLRPCD. Disulfide bonds link Cys273–Cys310, Cys290–Cys324, Cys301–Cys340, Cys304–Cys342, and Cys309–Cys346. A CTCK domain is found at 273–347; sequence CLAVYQPEEA…NACFCNLSCR (75 aa). The N-linked (GlcNAc...) asparagine glycan is linked to Asn284. A glycan (N-linked (GlcNAc...) asparagine) is linked at Asn343.

The protein belongs to the CCN family.

It is found in the secreted. In terms of biological role, downstream regulator in the Wnt/Frizzled-signaling pathway. Associated with cell survival. Adheres to skin and melanoma fibroblasts. In vitro binding to skin fibroblasts occurs through the proteoglycans, decorin and biglycan. The protein is CCN family member 4 (Ccn4) of Rattus norvegicus (Rat).